Here is a 356-residue protein sequence, read N- to C-terminus: Vanillin synthase, chloroplastic (356 aa).

An N-linked (GlcNAc...) asparagine glycan is attached at asparagine 122. Cystine bridges form between cysteine 159-cysteine 202 and cysteine 193-cysteine 235. Residue cysteine 162 is part of the active site. A glycan (N-linked (GlcNAc...) asparagine) is linked at asparagine 251. An intrachain disulfide couples cysteine 293 to cysteine 343. Residues histidine 302 and asparagine 322 contribute to the active site.

Belongs to the peptidase C1 family. Forms homodimers, homotrimers and homotetramers. In terms of tissue distribution, accumulates in the inner part of vanilla pods (at protein level). Expressed in single cells located a few cell layers from the inner epidermis.

It localises to the plastid. The protein resides in the chloroplast. It carries out the reaction (E)-ferulate + H2O = vanillin + acetate. The enzyme catalyses 4-O-beta-D-glucosyl-trans-ferulate + H2O = 4-O-beta-D-glucosyl-vanillin + acetate. The protein operates within aromatic compound metabolism; phenylpropanoid biosynthesis. Functionally, involved in the biosynthesis of vanillin (4-hydroxy-3-methoxy-benzaldehyde) and derivative natural products, key components of vanilla pods flavor. Catalyzes the double carbon bond cleavage of ferulic acid to vanillin and of their respective glucosides via a coupled non-oxidative hydratase/lyase reaction. Inactive toward p-coumaric acid, caffeic acid and their glucosides derivatives. The chain is Vanillin synthase, chloroplastic from Vanilla planifolia (Vanilla).